The chain runs to 472 residues: Zinc finger imprinted 3 (472 aa).

In terms of domain architecture, KRAB spans 8–80 (VTFEDVTVNF…EEEVLGSGRA (73 aa)). 11 consecutive C2H2-type zinc fingers follow at residues 167-189 (LKCN…LRRH), 195-217 (FECH…QKTH), 223-245 (YKCE…QKMH), 251-273 (YQCK…EKIH), 279-301 (YQCN…KKVH), 307-329 (FQCT…QRIH), 335-357 (YKCS…EKIH), 363-385 (YECD…KKIH), 391-413 (YECN…QKTH), 419-441 (YRCS…KKTH), and 447-470 (YGCS…KRIH).

Belongs to the krueppel C2H2-type zinc-finger protein family.

It is found in the nucleus. In terms of biological role, may be involved in transcriptional regulation. The protein is Zinc finger imprinted 3 (ZIM3) of Homo sapiens (Human).